We begin with the raw amino-acid sequence, 411 residues long: Phosphopentomutase (411 aa).

6 residues coordinate Mn(2+): aspartate 14, aspartate 306, histidine 311, aspartate 347, histidine 348, and histidine 359.

This sequence belongs to the phosphopentomutase family. Mn(2+) is required as a cofactor.

It localises to the cytoplasm. It catalyses the reaction 2-deoxy-alpha-D-ribose 1-phosphate = 2-deoxy-D-ribose 5-phosphate. The enzyme catalyses alpha-D-ribose 1-phosphate = D-ribose 5-phosphate. It participates in carbohydrate degradation; 2-deoxy-D-ribose 1-phosphate degradation; D-glyceraldehyde 3-phosphate and acetaldehyde from 2-deoxy-alpha-D-ribose 1-phosphate: step 1/2. In terms of biological role, isomerase that catalyzes the conversion of deoxy-ribose 1-phosphate (dRib-1-P) and ribose 1-phosphate (Rib-1-P) to deoxy-ribose 5-phosphate (dRib-5-P) and ribose 5-phosphate (Rib-5-P), respectively. The sequence is that of Phosphopentomutase from Lactococcus lactis subsp. cremoris (strain MG1363).